Reading from the N-terminus, the 2300-residue chain is Protein Ycf2 (2300 aa).

Gly1642 to Ser1649 serves as a coordination point for ATP.

This sequence belongs to the Ycf2 family.

It localises to the plastid. Its subcellular location is the chloroplast stroma. Its function is as follows. Probable ATPase of unknown function. Its presence in a non-photosynthetic plant (Epifagus virginiana) and experiments in tobacco indicate that it has an essential function which is probably not related to photosynthesis. The chain is Protein Ycf2 from Vitis vinifera (Grape).